The primary structure comprises 169 residues: Secreted RxLR effector protein BLN03 (169 aa).

An N-terminal signal peptide occupies residues 1 to 21 (MRPRKYIVVVLLSIAYTMCLA). The dEER signature appears at 51–54 (TEER). The chain crosses the membrane as a helical span at residues 149–169 (GSAFLFVIGFIVLLAFAMTAV).

The protein belongs to the RxLR effector family. Interacts with host transcription factor NAC069.

Its subcellular location is the secreted. It localises to the host membrane. Secreted effector that inhibits stress-induced relocalization of the endoplasmic reticulum tail-anchored transcription factors to the nucleus, thus affecting stress responses. The polypeptide is Secreted RxLR effector protein BLN03 (Bremia lactucae (Lettuce downy mildew)).